A 196-amino-acid chain; its full sequence is Pyridoxine/pyridoxamine 5'-phosphate oxidase (196 aa).

Position 49 (K49) interacts with substrate. The FMN site is built by K66 and Q88. Substrate is bound by residues Y106, R110, and S114. Residues 123–124 and W168 contribute to the FMN site; that span reads QS. Residue 174-176 coordinates substrate; it reads RLH. R178 lines the FMN pocket.

It belongs to the pyridoxamine 5'-phosphate oxidase family. In terms of assembly, homodimer. FMN is required as a cofactor.

It carries out the reaction pyridoxamine 5'-phosphate + O2 + H2O = pyridoxal 5'-phosphate + H2O2 + NH4(+). The enzyme catalyses pyridoxine 5'-phosphate + O2 = pyridoxal 5'-phosphate + H2O2. It functions in the pathway cofactor metabolism; pyridoxal 5'-phosphate salvage; pyridoxal 5'-phosphate from pyridoxamine 5'-phosphate: step 1/1. The protein operates within cofactor metabolism; pyridoxal 5'-phosphate salvage; pyridoxal 5'-phosphate from pyridoxine 5'-phosphate: step 1/1. Catalyzes the oxidation of either pyridoxine 5'-phosphate (PNP) or pyridoxamine 5'-phosphate (PMP) into pyridoxal 5'-phosphate (PLP). This chain is Pyridoxine/pyridoxamine 5'-phosphate oxidase, found in Bdellovibrio bacteriovorus (strain ATCC 15356 / DSM 50701 / NCIMB 9529 / HD100).